We begin with the raw amino-acid sequence, 511 residues long: L-arabinose isomerase (511 aa).

The Mn(2+) site is built by E316, E343, H360, and H459.

The protein belongs to the arabinose isomerase family. The cofactor is Mn(2+).

It carries out the reaction beta-L-arabinopyranose = L-ribulose. It participates in carbohydrate degradation; L-arabinose degradation via L-ribulose; D-xylulose 5-phosphate from L-arabinose (bacterial route): step 1/3. In terms of biological role, catalyzes the conversion of L-arabinose to L-ribulose. This Arthrobacter sp. (strain FB24) protein is L-arabinose isomerase.